A 236-amino-acid chain; its full sequence is Endonuclease NucS (236 aa).

It belongs to the NucS endonuclease family.

It localises to the cytoplasm. Functionally, cleaves both 3' and 5' ssDNA extremities of branched DNA structures. The sequence is that of Endonuclease NucS from Saccharolobus solfataricus (strain ATCC 35092 / DSM 1617 / JCM 11322 / P2) (Sulfolobus solfataricus).